The primary structure comprises 352 residues: DNA polymerase IV (352 aa).

Positions 6–186 (IIHIDMDAFY…LPLGKIPGAG (181 aa)) constitute a UmuC domain. Positions 10 and 104 each coordinate Mg(2+). Glu-105 is a catalytic residue.

It belongs to the DNA polymerase type-Y family. Monomer. Mg(2+) serves as cofactor.

It localises to the cytoplasm. It carries out the reaction DNA(n) + a 2'-deoxyribonucleoside 5'-triphosphate = DNA(n+1) + diphosphate. Its function is as follows. Poorly processive, error-prone DNA polymerase involved in untargeted mutagenesis. Copies undamaged DNA at stalled replication forks, which arise in vivo from mismatched or misaligned primer ends. These misaligned primers can be extended by PolIV. Exhibits no 3'-5' exonuclease (proofreading) activity. May be involved in translesional synthesis, in conjunction with the beta clamp from PolIII. In Neisseria gonorrhoeae (strain ATCC 700825 / FA 1090), this protein is DNA polymerase IV.